The following is a 68-amino-acid chain: ATP synthase F(0) complex subunit 8 (68 aa).

A helical transmembrane segment spans residues 8-24; the sequence is VWPTMIAPMLLTLFLIT. Lys54 bears the N6-acetyllysine; alternate mark. At Lys54 the chain carries N6-succinyllysine; alternate. The residue at position 57 (Lys57) is an N6-acetyllysine.

The protein belongs to the ATPase protein 8 family. As to quaternary structure, component of the ATP synthase complex composed at least of ATP5F1A/subunit alpha, ATP5F1B/subunit beta, ATP5MC1/subunit c (homooctomer), MT-ATP6/subunit a, MT-ATP8/subunit 8, ATP5ME/subunit e, ATP5MF/subunit f, ATP5MG/subunit g, ATP5MK/subunit k, ATP5MJ/subunit j, ATP5F1C/subunit gamma, ATP5F1D/subunit delta, ATP5F1E/subunit epsilon, ATP5PF/subunit F6, ATP5PB/subunit b, ATP5PD/subunit d, ATP5PO/subunit OSCP. ATP synthase complex consists of a soluble F(1) head domain (subunits alpha(3) and beta(3)) - the catalytic core - and a membrane F(0) domain - the membrane proton channel (subunits c, a, 8, e, f, g, k and j). These two domains are linked by a central stalk (subunits gamma, delta, and epsilon) rotating inside the F1 region and a stationary peripheral stalk (subunits F6, b, d, and OSCP). Interacts with PRICKLE3.

It is found in the mitochondrion membrane. In terms of biological role, subunit 8, of the mitochondrial membrane ATP synthase complex (F(1)F(0) ATP synthase or Complex V) that produces ATP from ADP in the presence of a proton gradient across the membrane which is generated by electron transport complexes of the respiratory chain. ATP synthase complex consist of a soluble F(1) head domain - the catalytic core - and a membrane F(1) domain - the membrane proton channel. These two domains are linked by a central stalk rotating inside the F(1) region and a stationary peripheral stalk. During catalysis, ATP synthesis in the catalytic domain of F(1) is coupled via a rotary mechanism of the central stalk subunits to proton translocation. In vivo, can only synthesize ATP although its ATP hydrolase activity can be activated artificially in vitro. Part of the complex F(0) domain. This chain is ATP synthase F(0) complex subunit 8, found in Gorilla gorilla gorilla (Western lowland gorilla).